A 396-amino-acid chain; its full sequence is Subtilisin-like protease 5 (396 aa).

Residues 1-20 (MTGFFTILSFSLAALSVTNA) form the signal peptide. The propeptide occupies 21 to 116 (AQILSVPKGA…VEPDAIISQH (96 aa)). The Inhibitor I9 domain maps to 37–113 (YIVVMKDDTS…VAFVEPDAII (77 aa)). A Peptidase S8 domain is found at 125-396 (PWGLSRLSNR…SRLLYNGSGR (272 aa)). Catalysis depends on charge relay system residues Asp-156 and His-187. Asn-230 and Asn-248 each carry an N-linked (GlcNAc...) asparagine glycan. Catalysis depends on Ser-342, which acts as the Charge relay system. Residues 376–389 (PTIRNPGPDTTSRL) are compositionally biased toward polar residues. Residues 376 to 396 (PTIRNPGPDTTSRLLYNGSGR) are disordered. A glycan (N-linked (GlcNAc...) asparagine) is linked at Asn-392.

It belongs to the peptidase S8 family.

The protein localises to the secreted. Its function is as follows. Secreted subtilisin-like serine protease with keratinolytic activity that contributes to pathogenicity. The protein is Subtilisin-like protease 5 (SUB5) of Arthroderma benhamiae (strain ATCC MYA-4681 / CBS 112371) (Trichophyton mentagrophytes).